The sequence spans 123 residues: MAPPKPSAKGAKKAAKTVTKPKDGKKRRHARKESYSVYIYRVLKQVHPDTGVSSKAMSIMNSFVNDVFERIAAEASRLAHYNKRSTISSREIQTAVRLILPGELAKHAVSEGTKAVTKYTSSK.

Residues 1-32 (MAPPKPSAKGAKKAAKTVTKPKDGKKRRHARK) are disordered. O-linked (GlcNAc) serine glycosylation occurs at serine 110. Residue lysine 118 forms a Glycyl lysine isopeptide (Lys-Gly) (interchain with G-Cter in ubiquitin) linkage.

Belongs to the histone H2B family. The nucleosome is a histone octamer containing two molecules each of H2A, H2B, H3 and H4 assembled in one H3-H4 heterotetramer and two H2A-H2B heterodimers. The octamer wraps approximately 147 bp of DNA. Post-translationally, monoubiquitination of Lys-118 gives a specific tag for epigenetic transcriptional activation and is also prerequisite for histone H3 'Lys-4' and 'Lys-79' methylation. In terms of processing, glcNAcylation at Ser-110 promotes monoubiquitination of Lys-118. It fluctuates in response to extracellular glucose, and associates with transcribed genes.

The protein localises to the nucleus. It localises to the chromosome. In terms of biological role, core component of nucleosome. Nucleosomes wrap and compact DNA into chromatin, limiting DNA accessibility to the cellular machineries which require DNA as a template. Histones thereby play a central role in transcription regulation, DNA repair, DNA replication and chromosomal stability. DNA accessibility is regulated via a complex set of post-translational modifications of histones, also called histone code, and nucleosome remodeling. The sequence is that of Histone H2B 2 (his-4) from Caenorhabditis elegans.